The following is a 92-amino-acid chain: Small ribosomal subunit protein uS19 (92 aa).

Belongs to the universal ribosomal protein uS19 family.

Protein S19 forms a complex with S13 that binds strongly to the 16S ribosomal RNA. This is Small ribosomal subunit protein uS19 from Mycoplasmopsis synoviae (strain 53) (Mycoplasma synoviae).